Consider the following 480-residue polypeptide: Adenosylhomocysteinase (480 aa).

Substrate is bound by residues Thr63, Asp142, and Glu203. An NAD(+)-binding site is contributed by Thr204 to Thr206. Positions 233 and 237 each coordinate substrate. Residues Asn238, Gly267 to Gly272, Glu290, Asn325, Ile346 to His348, and Asn394 each bind NAD(+).

This sequence belongs to the adenosylhomocysteinase family. NAD(+) serves as cofactor.

The protein resides in the cytoplasm. The catalysed reaction is S-adenosyl-L-homocysteine + H2O = L-homocysteine + adenosine. Its pathway is amino-acid biosynthesis; L-homocysteine biosynthesis; L-homocysteine from S-adenosyl-L-homocysteine: step 1/1. Its function is as follows. May play a key role in the regulation of the intracellular concentration of adenosylhomocysteine. This Xylella fastidiosa (strain 9a5c) protein is Adenosylhomocysteinase.